Here is a 292-residue protein sequence, read N- to C-terminus: MSEIDWRKMPPLTALRAFAATASEGGFSAAARKLNVTHAAIAQQVRALEADLDVPLVWRDGKHLHLTPEGERFAKALADGFSMIQSAADMLRADTSEKALTVTVPPVFASEWLMPRLARFWKKHPDIPLSLLPDARLVDLKEIGANIGIRFGVGKWPGVISVFLTAAPQVVVAAPELLGGRKKLSLREMAMLPWVREGDWPEQMQLLESMGLVPAALKFVDFPNEELALAAAREGIGLHLETEALIVEDLKLGWLVKIHELTEESLGYYIVRPPGRLNPAAKIFIDWLKAEA.

The HTH lysR-type domain occupies P10–T67. The segment at residues F27–R46 is a DNA-binding region (H-T-H motif).

Belongs to the LysR transcriptional regulatory family.

Its function is as follows. Functions as a low-light activator of ahcY expression (gene for S-adenosyl-L-homocysteine hydrolase) and as a high-light activator of an uncharacterized 21.6 kDa protein in the ahcY-hvrB intergenic region (orf5). It is also a negative regulator of its own expression. The chain is AhcY transcriptional activator HvrB (hvrB) from Rhodobacter capsulatus (strain ATCC BAA-309 / NBRC 16581 / SB1003).